A 427-amino-acid chain; its full sequence is Homeobox protein knotted-1-like 3 (427 aa).

Disordered regions lie at residues 19–49 (QTHH…QPAP) and 272–291 (TGVS…EDDQ). Positions 272 to 284 (TGVSPGEGTSATM) are enriched in polar residues. Positions 330–350 (ELKHELKQGYKEKIVDIREEI) constitute an ELK domain. A DNA-binding region (homeobox; TALE-type) is located at residues 351–414 (LRKRRAGKLP…NQRKRNWHSN (64 aa)).

This sequence belongs to the TALE/KNOX homeobox family. Maximally expressed in sepals, petals and fully expanded leaves. Also expressed in other flower organs and in developing leaves. Low level expression in stem internodes.

The protein localises to the nucleus. This chain is Homeobox protein knotted-1-like 3, found in Malus domestica (Apple).